We begin with the raw amino-acid sequence, 30 residues long: MNPNCARCGKIVYPTEKVNCLDKFWHKACF.

Met-1 is modified (N-acetylmethionine). The LIM zinc-binding domain maps to 5–30; it reads CARCGKIVYPTEKVNCLDKFWHKACF.

As to quaternary structure, interacts with F-actin. Interacts with ANKRD54. Interacts with KBTBD10. Phosphorylated.

It localises to the cytoplasm. The protein localises to the cell cortex. It is found in the cytoskeleton. Functionally, plays an important role in the regulation of dynamic actin-based, cytoskeletal activities. Agonist-dependent changes in LASP1 phosphorylation may also serve to regulate actin-associated ion transport activities, not only in the parietal cell but also in certain other F-actin-rich secretory epithelial cell types. The polypeptide is LIM and SH3 domain protein 1 (LASP1) (Sus scrofa (Pig)).